The primary structure comprises 680 residues: Translation factor GUF1 homolog, chloroplastic (680 aa).

The N-terminal 51 residues, 1–51 (MAAKINSLAALVSLQASHHHHXSTPFYFSPFSPHLSTTLTSRRRSLRSAVV), are a transit peptide targeting the chloroplast. Positions 83–264 (SNIRNFCIIA…AIVKRIPPPC (182 aa)) constitute a tr-type G domain. GTP contacts are provided by residues 92–99 (AHIDHGKS), 157–161 (DTPGH), and 211–214 (NKID).

This sequence belongs to the TRAFAC class translation factor GTPase superfamily. Classic translation factor GTPase family. LepA subfamily.

It localises to the plastid. It is found in the chloroplast. It carries out the reaction GTP + H2O = GDP + phosphate + H(+). Functionally, promotes chloroplast protein synthesis. May act as a fidelity factor of the translation reaction, by catalyzing a one-codon backward translocation of tRNAs on improperly translocated ribosomes. In Vitis vinifera (Grape), this protein is Translation factor GUF1 homolog, chloroplastic.